Reading from the N-terminus, the 287-residue chain is ATP synthase gamma chain (287 aa).

It belongs to the ATPase gamma chain family. F-type ATPases have 2 components, CF(1) - the catalytic core - and CF(0) - the membrane proton channel. CF(1) has five subunits: alpha(3), beta(3), gamma(1), delta(1), epsilon(1). CF(0) has three main subunits: a, b and c.

The protein resides in the cell inner membrane. In terms of biological role, produces ATP from ADP in the presence of a proton gradient across the membrane. The gamma chain is believed to be important in regulating ATPase activity and the flow of protons through the CF(0) complex. The protein is ATP synthase gamma chain of Colwellia maris.